The following is a 297-amino-acid chain: Palmitoyl-protein thioesterase ABHD10, mitochondrial (297 aa).

The N-terminal 43 residues, 1-43 (MAAWAPCRRWGWAAVSFGRHPGLSASLARKPPRAWWLSACRQK), are a transit peptide targeting the mitochondrion. The AB hydrolase-1 domain occupies 69–196 (IIFIPGYLSN…EIEMKGEWTL (128 aa)). Residues serine 143, aspartate 240, and histidine 270 each act as charge relay system in the active site.

The protein belongs to the AB hydrolase superfamily.

It is found in the mitochondrion. It carries out the reaction S-hexadecanoyl-L-cysteinyl-[protein] + H2O = L-cysteinyl-[protein] + hexadecanoate + H(+). It catalyses the reaction mycophenolic acid O-acyl-beta-D-glucuronide + H2O = mycophenolate + D-glucuronate + H(+). With respect to regulation, inhibited by palmostatin-B. Functionally, acts as an acyl-protein thioesterase that hydrolyzes fatty acids from acylated residues in proteins. Regulates the mitochondrial S-depalmitoylation of the nucleophilic active site residue of peroxiredoxin-5/PRDX5, a key antioxidant protein, therefore modulating mitochondrial antioxidant ability. Also catalyzes the deglucuronidation of mycophenolic acid acyl-glucuronide, an active metabolite of the immunosuppressant drug mycophenolate. This Mus musculus (Mouse) protein is Palmitoyl-protein thioesterase ABHD10, mitochondrial.